Reading from the N-terminus, the 399-residue chain is Long-chain primary alcohol dehydrogenase AdhA (399 aa).

It belongs to the iron-containing alcohol dehydrogenase family. As to quaternary structure, homotetramer. Zn(2+) is required as a cofactor.

The catalysed reaction is a primary alcohol + NADP(+) = an aldehyde + NADPH + H(+). Functionally, alcohol dehydrogenase active against primary long-chain alcohols. Pentan-1-ol is the optimum substrate in vitro, but also shows efficient dehydrogenase activity on propanol, hexanol, and ethanol. The chain is Long-chain primary alcohol dehydrogenase AdhA (adhA) from Thermoanaerobacter ethanolicus (Clostridium thermohydrosulfuricum).